The sequence spans 484 residues: Cytochrome P450 monooxygenase poxD (484 aa).

Residues 2–24 (VSPVVLATTAMIVVFLLAQRYLS) traverse the membrane as a helical segment. Heme is bound at residue Cys-429.

Belongs to the cytochrome P450 family. Requires heme as cofactor.

It is found in the membrane. It participates in secondary metabolite biosynthesis. In terms of biological role, cytochrome P450 monooxygenase; part of the gene cluster that mediates the biosynthesis of oxaleimides, cytotoxic compounds containing an unusual disubstituted succinimide moiety. The first step of the pathway is provided by the HR-PKS poxF that serves in a new mode of collaborative biosynthesis with the PKS-NRPS poxE, by providing the olefin containing amino acid substrate via the synthesis of an ACP-bound dec-4-enoate. The cytochrome P450 monooxygenase poxM-catalyzed oxidation at the alpha-position creates the enzyme-bound 2-hydroxydec-4-enoyl-ACP thioester, which may be prone to spontaneous hydrolysis to yield 2-hydroxydec-4-enoic acid due to increased electrophilicity of the carbonyl. 2-hydroxydec-4-enoic acid can then be further oxidized by poxM to yield the alpha-ketoacid 2-oxodec-4-enoicacid, which is reductively aminated by the aminotransferase poxL to yield (S,E)-2-aminodec-4-enoic acid. The Hybrid PKS-NRPS synthetase poxE then performs condensation between the octaketide product of its PKS modules and the amino group of (S,E)-2-aminodec-4-enoic acid which is activated and incorporated by the adenylation domain. The resulting aminoacyl product can be cyclized by the Diels-Alderase PoxQ and reductively released by the reductive (R) domain of poxE to yield an aldehyde intermediate. The released aldehyde is then substrate for a Knoevenagel condensation by the hydrolyase poxO followed by an oxidation at the 5-position of the pyrrolidone ring. The presence of the olefin from the amino acid building block allows for migration of the substituted allyl group to occur. This allylic transposition reaction takes place in a conjugate addition, semipinacol-like fashion to yield a succinimide intermediate. Iterative two-electron oxidations of the C7 methyl of the succinimide intermediate to the carboxylic acid can be catalyzed by one of two remaining cytochrome P450 monooxygenasess poxC or poxD to yield oxaleimide A. Subsequent oxidation yields the maleimide scaffold oxaleimide I. Both oxaleimide A and oxaleimide I can undergo oxidative modifications in the decalin ring to yield the series of products oxaleimides B to H. The polypeptide is Cytochrome P450 monooxygenase poxD (Penicillium oxalicum).